The sequence spans 759 residues: Probable Na(+)/H(+) antiporter C3A11.09 (759 aa).

11 helical membrane-spanning segments follow: residues 12–32 (HLAYAIIGGFTSLFMLCSLII), 36–56 (LFLGEATMATATGLIFGPYVA), 105–125 (MLLPVMIFGWLVSTGFMYALI), 133–153 (SLAIAACITATDPVLASSIVG), 172–192 (ESGCNDGMAIPFLYLAIYLII), 206–226 (IIILYECTFGCVLGAIIGVIA), 244–264 (FLVFYFVLALFCGGIGTIIGV), 295–315 (VIDLLLNLSFFVYVGAIMPWP), 319–339 (MPHMDLSVWRLVVLAICILIA), 361–381 (ALFAGHFGPIGVGALYTCLVA), and 415–435 (VVCFLVLSSIIVHGSSIAFFM). At Thr-442 the chain carries Phosphothreonine. Ser-446 carries the phosphoserine modification. Position 448 is a phosphothreonine (Thr-448). Basic and acidic residues-rich tracts occupy residues 514-529 (LREERAESPRGGHYDA), 537-547 (YESRQPRRSNE), 590-601 (IDEKLAQGDPKA), 622-647 (NLHEPDDERQREPTLGHIESSIENHR), and 655-671 (SESHLRENSVERRRREQ). 3 disordered regions span residues 514–558 (LREE…NPGD), 578–606 (SHTSSRDANGPSIDEKLAQGDPKAKSFGR), and 622–759 (NLHE…RAWE). A compositionally biased stretch (polar residues) spans 696-713 (NENNESSSDTRNGLLSDN). Residues Asn-699 and Asn-713 are each glycosylated (N-linked (GlcNAc...) asparagine). The span at 724-733 (RAPSAAVSSE) shows a compositional bias: low complexity. At Ser-735 the chain carries Phosphoserine.

It belongs to the fungal Na(+)/H(+) exchanger family.

The protein localises to the membrane. Its function is as follows. Sodium export from cell, takes up external protons in exchange for internal sodium ions. This Schizosaccharomyces pombe (strain 972 / ATCC 24843) (Fission yeast) protein is Probable Na(+)/H(+) antiporter C3A11.09 (sod22).